The primary structure comprises 434 residues: Glutamate-1-semialdehyde 2,1-aminomutase 1 (434 aa).

Residue K270 is modified to N6-(pyridoxal phosphate)lysine.

Belongs to the class-III pyridoxal-phosphate-dependent aminotransferase family. HemL subfamily. As to quaternary structure, homodimer. Pyridoxal 5'-phosphate serves as cofactor.

The protein localises to the cytoplasm. It catalyses the reaction (S)-4-amino-5-oxopentanoate = 5-aminolevulinate. Its pathway is porphyrin-containing compound metabolism; protoporphyrin-IX biosynthesis; 5-aminolevulinate from L-glutamyl-tRNA(Glu): step 2/2. This is Glutamate-1-semialdehyde 2,1-aminomutase 1 from Bacillus anthracis (strain A0248).